Consider the following 143-residue polypeptide: Histone H2B (143 aa).

The tract at residues 1–52 (MAPKPASTAGKAPASTASKAPVKSDAAKTASKSKVSSGADGEKKKRKKTRKE) is disordered. Position 11 is an N6-acetyllysine; alternate (Lys11). Residue Lys11 forms a Glycyl lysine isopeptide (Lys-Gly) (interchain with G-Cter in SUMO); alternate linkage. Position 15 is a phosphoserine (Ser15). Lys19 is subject to N6-acetyllysine. Over residues 23 to 39 (KSDAAKTASKSKVSSGA) the composition is skewed to low complexity. Lys137 participates in a covalent cross-link: Glycyl lysine isopeptide (Lys-Gly) (interchain with G-Cter in ubiquitin).

This sequence belongs to the histone H2B family. As to quaternary structure, the nucleosome is a histone octamer containing two molecules each of H2A, H2B, H3 and H4 assembled in one H3-H4 heterotetramer and two H2A-H2B heterodimers. The octamer wraps approximately 147 bp of DNA. Monoubiquitinated to form H2BK123ub1. H2BK123ub1 gives a specific tag for epigenetic transcriptional activation and is also prerequisite for H3K4me and H3K79me formation. H2BK123ub1 also modulates the formation of double-strand breaks during meiosis and is a prerequisite for DNA-damage checkpoint activation. Post-translationally, phosphorylated to form H2BS10ph during progression through meiotic prophase. May be correlated with chromosome condensation. In terms of processing, acetylation of N-terminal lysines and particularly formation of H2BK11ac has a positive effect on transcription. Sumoylation to form H2BK6su occurs preferentially near the telomeres and represses gene transcription.

The protein localises to the nucleus. Its subcellular location is the chromosome. Core component of nucleosome. Nucleosomes wrap and compact DNA into chromatin, limiting DNA accessibility to the cellular machineries which require DNA as a template. Histones thereby play a central role in transcription regulation, DNA repair, DNA replication and chromosomal stability. DNA accessibility is regulated via a complex set of post-translational modifications of histones, also called histone code, and nucleosome remodeling. This is Histone H2B (htbA) from Agaricus bisporus (White button mushroom).